Reading from the N-terminus, the 415-residue chain is Probable carboxypeptidase ACLA_013260 (415 aa).

The first 17 residues, 1 to 17 (MKFPWLLLVKGAASVAA), serve as a signal peptide directing secretion. A glycan (N-linked (GlcNAc...) asparagine) is linked at N97. D145 contacts Zn(2+). E177 functions as the Proton acceptor in the catalytic mechanism. E178 is a Zn(2+) binding site. N-linked (GlcNAc...) asparagine glycosylation occurs at N271.

Belongs to the peptidase M20A family. Requires Zn(2+) as cofactor.

The protein localises to the secreted. The chain is Probable carboxypeptidase ACLA_013260 from Aspergillus clavatus (strain ATCC 1007 / CBS 513.65 / DSM 816 / NCTC 3887 / NRRL 1 / QM 1276 / 107).